A 145-amino-acid chain; its full sequence is HTH-type transcriptional regulator MhqR (145 aa).

Positions 5 to 137 constitute an HTH marR-type domain; sequence SLKLFIVLSR…CTEMLKRVGL (133 aa). A DNA-binding region (H-T-H motif) is located at residues 51-74; sequence LQQIGDKILLASGSITYVVDKLEQ.

In terms of biological role, negatively regulates mhqA, mhqED, mhqNOP, and azoR2 which may contribute to the degradation of aromatic compounds. The chain is HTH-type transcriptional regulator MhqR (mhqR) from Bacillus subtilis (strain 168).